The following is a 353-amino-acid chain: uncharacterized protein (353 aa).

Residues 267–287 form a helical membrane-spanning segment; that stretch reads GLPLVVIEAMAFGLPIVAFNC.

This sequence belongs to the glycosyltransferase group 1 family. Glycosyltransferase 4 subfamily.

The protein localises to the membrane. This is an uncharacterized protein from Haemophilus influenzae (strain ATCC 51907 / DSM 11121 / KW20 / Rd).